We begin with the raw amino-acid sequence, 821 residues long: DNA ligase (821 aa).

NAD(+) contacts are provided by residues 33 to 37 (DVDYD), 82 to 83 (SL), and Glu113. The active-site N6-AMP-lysine intermediate is the Lys115. NAD(+) contacts are provided by Arg136, Glu173, Lys290, and Lys314. Zn(2+) is bound by residues Cys408, Cys411, Cys426, and Cys432. Positions 741 to 821 (IVAGPLDGQT…RLLAYLAEHE (81 aa)) constitute a BRCT domain.

Belongs to the NAD-dependent DNA ligase family. LigA subfamily. The cofactor is Mg(2+). Mn(2+) is required as a cofactor.

It catalyses the reaction NAD(+) + (deoxyribonucleotide)n-3'-hydroxyl + 5'-phospho-(deoxyribonucleotide)m = (deoxyribonucleotide)n+m + AMP + beta-nicotinamide D-nucleotide.. In terms of biological role, DNA ligase that catalyzes the formation of phosphodiester linkages between 5'-phosphoryl and 3'-hydroxyl groups in double-stranded DNA using NAD as a coenzyme and as the energy source for the reaction. It is essential for DNA replication and repair of damaged DNA. In Stenotrophomonas maltophilia (strain R551-3), this protein is DNA ligase.